A 1330-amino-acid chain; its full sequence is pre-mRNA 3' end processing protein WDR33 (1330 aa).

N-acetylalanine is present on Ala2. A Phosphoserine modification is found at Ser7. Position 46 is an N6-acetyllysine (Lys46). 7 WD repeats span residues 117–156 (KVKC…FETI), 159–198 (AHDS…VKMF), 200–239 (AHKE…EERI), 242–283 (GHGA…SLAT), 286–325 (AHKN…EELQ), 329–369 (GHKK…EVGG), and 373–412 (AHEG…DKMR). Glycyl lysine isopeptide (Lys-Gly) (interchain with G-Cter in SUMO2) cross-links involve residues Lys526, Lys530, and Lys560. The tract at residues 566–1330 (QKQADQIQPP…GTSRGSGRGR (765 aa)) is disordered. The segment covering 588-607 (FSGQGPISQIPQGFQQPHPS) has biased composition (polar residues). The 153-residue stretch at 617–769 (GPPGPQGQFR…GPASQGIQGP (153 aa)) folds into the Collagen-like domain. A compositionally biased stretch (low complexity) spans 622-642 (QGQFRAPGPQGQMGPQGPPMH). The span at 682–694 (PHGPLGPQGPPGP) shows a compositional bias: pro residues. 2 stretches are compositionally biased toward low complexity: residues 695 to 706 (QGSSGPQGHMGP) and 725 to 750 (QGHM…GMQG). Residue Arg776 is modified to Omega-N-methylarginine. Residues 848–863 (GPSGSQGQQGPPQGSL) show a composition bias toward low complexity. Arg909 is modified (asymmetric dimethylarginine). Positions 926 to 935 (PGLGQQGAQG) are enriched in low complexity. Composition is skewed to basic and acidic residues over residues 965-983 (SERR…DRGP) and 992-1027 (GPPD…EFEG). The residue at position 981 (Arg981) is an Omega-N-methylarginine. Arg1028 is modified (omega-N-methylarginine). Composition is skewed to basic and acidic residues over residues 1049–1061 (PDHR…DGRG) and 1071–1115 (EGRR…RGRD). The segment covering 1123–1133 (FGPEEGFDASD) has biased composition (acidic residues). 3 stretches are compositionally biased toward basic and acidic residues: residues 1134-1143 (EAARGRDLRG), 1163-1211 (EFPR…RERS), and 1236-1253 (SEHR…DRGS). Ser1204 carries the post-translational modification Phosphoserine. At Arg1256 the chain carries Omega-N-methylarginine. Basic and acidic residues predominate over residues 1275 to 1287 (DGDHHDGYHRDEP). Low complexity predominate over residues 1293 to 1323 (GSSSSSRGARSGSNWGRGSNMNSGPPRRGTS). An Asymmetric dimethylarginine; alternate modification is found at Arg1309. Arg1309 carries the post-translational modification Omega-N-methylarginine; alternate.

It belongs to the WD repeat WDR33 family. Component of the cleavage and polyadenylation specificity factor (CPSF) module of the pre-mRNA 3'-end processing complex. Interacts with CPSF3/CPSF73. In terms of tissue distribution, most highly expressed in testis.

The protein localises to the nucleus. Essential for both cleavage and polyadenylation of pre-mRNA 3' ends. This Mus musculus (Mouse) protein is pre-mRNA 3' end processing protein WDR33 (Wdr33).